The sequence spans 133 residues: MSFIGEFKEFAMKGNVLDMAVGVVIGTAFGKIVSSLVGDIIMPIVGVITGGVNFTDLKITLKDAAQGVPAVTINYGNFIQTAVDFLIIAFCIFCVIKAINSLKRKPAEPEVAQPAAPAEDIVLLTQIRDLLKK.

2 helical membrane passes run 10–30 (FAMK…TAFG) and 76–96 (GNFI…FCVI).

This sequence belongs to the MscL family. As to quaternary structure, homopentamer.

Its subcellular location is the cell inner membrane. Its function is as follows. Channel that opens in response to stretch forces in the membrane lipid bilayer. May participate in the regulation of osmotic pressure changes within the cell. The polypeptide is Large-conductance mechanosensitive channel (Campylobacter curvus (strain 525.92)).